Consider the following 495-residue polypeptide: Glutamate--tRNA ligase (495 aa).

The 'HIGH' region signature appears at Pro12–Asn22. Residues Lys259–Arg263 carry the 'KMSKS' region motif. Position 262 (Lys262) interacts with ATP.

The protein belongs to the class-I aminoacyl-tRNA synthetase family. Glutamate--tRNA ligase type 1 subfamily. Monomer.

The protein resides in the cytoplasm. It catalyses the reaction tRNA(Glu) + L-glutamate + ATP = L-glutamyl-tRNA(Glu) + AMP + diphosphate. In terms of biological role, catalyzes the attachment of glutamate to tRNA(Glu) in a two-step reaction: glutamate is first activated by ATP to form Glu-AMP and then transferred to the acceptor end of tRNA(Glu). This Ligilactobacillus salivarius (strain UCC118) (Lactobacillus salivarius) protein is Glutamate--tRNA ligase.